Reading from the N-terminus, the 276-residue chain is Halorhodopsin (276 aa).

The propeptide occupies 1-21; it reads MTAVSTTATTVLQATQSDVLQ. The Extracellular segment spans residues 22–25; the sequence is EIQS. The helical transmembrane segment at 26-51 threads the bilayer; the sequence is NFLLNSSIWVNIALAGVVILLFVAMG. Topologically, residues 52–57 are cytoplasmic; the sequence is RDLESP. Residues 58–81 form a helical membrane-spanning segment; sequence RAKLIWVATMLVPLVSISSYAGLA. Topologically, residues 82–105 are extracellular; the sequence is SGLTVGFLQMPPGHALAGQEVLSP. Residues 106-127 traverse the membrane as a helical segment; the sequence is WGRYLTWTFSTPMILLALGLLA. Topologically, residues 128 to 130 are cytoplasmic; that stretch reads DTD. Residues 131–154 traverse the membrane as a helical segment; it reads IASLFTAITMDIGMCVTGLAAALI. Topologically, residues 155 to 157 are extracellular; sequence TSS. The helical transmembrane segment at 158–180 threads the bilayer; the sequence is HLLRWVFYGISCAFFVAVLYVLL. Residues 181 to 192 are Cytoplasmic-facing; the sequence is VQWPADAEAAGT. The chain crosses the membrane as a helical span at residues 193-216; that stretch reads SEIFGTLKILTVVLWLGYPILWAL. Residues 217–225 are Extracellular-facing; it reads GSEGVALLS. The helical transmembrane segment at 226-254 threads the bilayer; the sequence is VGVTSWGYSGLDILAKYVFAFLLLRWVAA. Position 241 is an N6-(retinylidene)lysine (lysine 241). Residues 255-276 lie on the Cytoplasmic side of the membrane; that stretch reads NEGTVSGSGMGIGSGGAAPADD.

The protein belongs to the archaeal/bacterial/fungal opsin family.

It localises to the cell membrane. Light-driven anion pump. This Halobacterium halobium (strain shark) protein is Halorhodopsin.